The following is a 141-amino-acid chain: Nucleoside diphosphate kinase (141 aa).

Residues K11, F59, R87, T93, R104, and N114 each contribute to the ATP site. H117 serves as the catalytic Pros-phosphohistidine intermediate.

This sequence belongs to the NDK family. In terms of assembly, homotetramer. It depends on Mg(2+) as a cofactor.

Its subcellular location is the cytoplasm. The enzyme catalyses a 2'-deoxyribonucleoside 5'-diphosphate + ATP = a 2'-deoxyribonucleoside 5'-triphosphate + ADP. The catalysed reaction is a ribonucleoside 5'-diphosphate + ATP = a ribonucleoside 5'-triphosphate + ADP. In terms of biological role, major role in the synthesis of nucleoside triphosphates other than ATP. The ATP gamma phosphate is transferred to the NDP beta phosphate via a ping-pong mechanism, using a phosphorylated active-site intermediate. The protein is Nucleoside diphosphate kinase of Pseudomonas putida (strain GB-1).